We begin with the raw amino-acid sequence, 212 residues long: Ribonuclease HII (212 aa).

The RNase H type-2 domain occupies 22–212; that stretch reads ILIAGLDEAG…APLKGMIDGL (191 aa). 3 residues coordinate a divalent metal cation: D28, E29, and D123.

Belongs to the RNase HII family. Mn(2+) serves as cofactor. The cofactor is Mg(2+).

It is found in the cytoplasm. It carries out the reaction Endonucleolytic cleavage to 5'-phosphomonoester.. Endonuclease that specifically degrades the RNA of RNA-DNA hybrids. In Dehalococcoides mccartyi (strain ATCC BAA-2100 / JCM 16839 / KCTC 5957 / BAV1), this protein is Ribonuclease HII.